A 258-amino-acid chain; its full sequence is Tritrans,polycis-undecaprenyl-diphosphate synthase (geranylgeranyl-diphosphate specific) (258 aa).

Residue Asp-37 is part of the active site. Asp-37 provides a ligand contact to Mg(2+). Substrate contacts are provided by residues 38–41 (GNRR), His-54, and 82–84 (STE). Asn-85 serves as the catalytic Proton acceptor. Residues Phe-86, Arg-88, Arg-207, and 213-215 (RIS) contribute to the substrate site. Glu-226 is a binding site for Mg(2+).

The protein belongs to the UPP synthase family. In terms of assembly, homodimer. Requires Mg(2+) as cofactor.

The catalysed reaction is geranylgeranyl diphosphate + 7 isopentenyl diphosphate = tri-trans,hepta-cis-undecaprenyl diphosphate + 7 diphosphate. Functionally, catalyzes the sequential condensation of isopentenyl diphosphate (IPP) with geranylgeranyl diphosphate (GGPP) to yield (2Z,6Z,10Z,14Z,18Z,22Z,26Z,30E,34E,38E)-undecaprenyl diphosphate (tritrans,heptacis-UPP). It is probably the precursor of glycosyl carrier lipids. This is Tritrans,polycis-undecaprenyl-diphosphate synthase (geranylgeranyl-diphosphate specific) from Thermoplasma volcanium (strain ATCC 51530 / DSM 4299 / JCM 9571 / NBRC 15438 / GSS1).